The following is a 195-amino-acid chain: Imidazoleglycerol-phosphate dehydratase (195 aa).

It belongs to the imidazoleglycerol-phosphate dehydratase family.

Its subcellular location is the cytoplasm. The catalysed reaction is D-erythro-1-(imidazol-4-yl)glycerol 3-phosphate = 3-(imidazol-4-yl)-2-oxopropyl phosphate + H2O. It participates in amino-acid biosynthesis; L-histidine biosynthesis; L-histidine from 5-phospho-alpha-D-ribose 1-diphosphate: step 6/9. The polypeptide is Imidazoleglycerol-phosphate dehydratase (Endomicrobium trichonymphae).